A 196-amino-acid polypeptide reads, in one-letter code: V-type proton ATPase proteolipid subunit (196 aa).

At 1–25 (MFQLLSFLLSGEATAVERIITDACP) the chain is on the lumenal side. The chain crosses the membrane as a helical span at residues 26 to 46 (VYAPFFGAMGVTAALVFTVMG). Residues 47 to 72 (AAYGTAKASVGISNMGVMKPDLVIKA) are Cytoplasmic-facing. A helical membrane pass occupies residues 73–93 (FIPVIFAGVIAIYGLIICVIL). Topologically, residues 94 to 111 (VGGIKPNANYTLMKSFTD) are lumenal. Residues 112–132 (LGAGLTVGLCGLAAGMAIGIV) form a helical membrane-spanning segment. Topologically, residues 133-150 (GDSGVRAFGQQPKLYVIM) are cytoplasmic. Residues 151–171 (MLILIFSEALGLYGLIIGILL) form a helical membrane-spanning segment. Topologically, residues 172 to 196 (SSVSDTYCPGQALVPLNSGNVIGKN) are lumenal.

It belongs to the V-ATPase proteolipid subunit family. V-ATPase is a heteromultimeric enzyme composed of a peripheral catalytic V1 complex (main components: subunits A, B, C, D, E, and F) attached to an integral membrane V0 proton pore complex (main component: the proteolipid protein; which is present as a hexamer that forms the proton-conducting pore).

The protein localises to the vacuole membrane. Its function is as follows. Proton-conducting pore forming subunit of the membrane integral V0 complex of vacuolar ATPase. V-ATPase is responsible for acidifying a variety of intracellular compartments in eukaryotic cells. This chain is V-type proton ATPase proteolipid subunit (vatP), found in Dictyostelium discoideum (Social amoeba).